Reading from the N-terminus, the 325-residue chain is MATH domain and coiled-coil domain-containing protein At3g58340 (325 aa).

Residues 6–131 (DKKFCWEIKN…NGQVMIVAEV (126 aa)) form the MATH domain. The stretch at 266-315 (KVDWLEKKLDHVKEKKEKEQSGLIILQGIEQQLHELMHKCEKKKSEVLSV) forms a coiled coil.

This Arabidopsis thaliana (Mouse-ear cress) protein is MATH domain and coiled-coil domain-containing protein At3g58340.